The chain runs to 753 residues: Photosystem I P700 chlorophyll a apoprotein A1 (753 aa).

8 consecutive transmembrane segments (helical) span residues 73–96 (IFSA…FHAA), 159–182 (LYSA…YHYH), 198–222 (MTHH…HVSL), 294–312 (IAHH…GHMY), 349–372 (WHAQ…HHMY), 388–414 (LNLF…IFMV), 436–458 (TIIS…LYIH), and 534–552 (FMIH…LILI). Cysteine 576 and cysteine 585 together coordinate [4Fe-4S] cluster. The next 2 helical transmembrane spans lie at 592 to 613 (HIFL…HFFW) and 667 to 689 (LSAY…MFLF). Position 678 (histidine 678) interacts with chlorophyll a'. Methionine 686 and tyrosine 694 together coordinate chlorophyll a. Tryptophan 695 lines the phylloquinone pocket. The chain crosses the membrane as a helical span at residues 727 to 747 (AVGLGHYLLGGIVTSWSFYLA).

This sequence belongs to the PsaA/PsaB family. The PsaA/B heterodimer binds the P700 chlorophyll special pair and subsequent electron acceptors. PSI consists of a core antenna complex that captures photons, and an electron transfer chain that converts photonic excitation into a charge separation. The cyanobacterial PSI reaction center is composed of one copy each of PsaA,B,C,D,E,F,I,J,K,L,M and X, and forms trimeric complexes. PSI electron transfer chain: 5 chlorophyll a, 1 chlorophyll a', 2 phylloquinones and 3 4Fe-4S clusters. PSI core antenna: 90 chlorophyll a, 22 carotenoids, 3 phospholipids and 1 galactolipid. P700 is a chlorophyll a/chlorophyll a' dimer, A0 is one or more chlorophyll a, A1 is one or both phylloquinones and FX is a shared 4Fe-4S iron-sulfur center. is required as a cofactor.

Its subcellular location is the cellular thylakoid membrane. It carries out the reaction reduced [plastocyanin] + hnu + oxidized [2Fe-2S]-[ferredoxin] = oxidized [plastocyanin] + reduced [2Fe-2S]-[ferredoxin]. Functionally, psaA and PsaB bind P700, the primary electron donor of photosystem I (PSI), as well as the electron acceptors A0, A1 and FX. PSI is a plastocyanin/cytochrome c6-ferredoxin oxidoreductase, converting photonic excitation into a charge separation, which transfers an electron from the donor P700 chlorophyll pair to the spectroscopically characterized acceptors A0, A1, FX, FA and FB in turn. Oxidized P700 is reduced on the lumenal side of the thylakoid membrane by plastocyanin or cytochrome c6. This Acaryochloris marina (strain MBIC 11017) protein is Photosystem I P700 chlorophyll a apoprotein A1.